An 89-amino-acid polypeptide reads, in one-letter code: Small ribosomal subunit protein uS15 (89 aa).

The protein belongs to the universal ribosomal protein uS15 family. As to quaternary structure, part of the 30S ribosomal subunit. Forms a bridge to the 50S subunit in the 70S ribosome, contacting the 23S rRNA.

Its function is as follows. One of the primary rRNA binding proteins, it binds directly to 16S rRNA where it helps nucleate assembly of the platform of the 30S subunit by binding and bridging several RNA helices of the 16S rRNA. Forms an intersubunit bridge (bridge B4) with the 23S rRNA of the 50S subunit in the ribosome. In Anaeromyxobacter sp. (strain Fw109-5), this protein is Small ribosomal subunit protein uS15.